The primary structure comprises 103 residues: MIGKEVTIPDIILQEEFGQPIDLQCYENLTAEAPAEQELEAEEELIQGIPYKVIATCGGGCGARLRVFVLATDAAIRSFQELLLEELQFLCPQCREEIRNGGR.

An E7 terminal domain region spans residues 1–47 (MIGKEVTIPDIILQEEFGQPIDLQCYENLTAEAPAEQELEAEEELIQ). The LXCXE motif; interaction with host RB1 and TMEM173/STING motif lies at 23–27 (LQCYE). A zinc finger spans residues 57–94 (CGGGCGARLRVFVLATDAAIRSFQELLLEELQFLCPQC). The Nuclear export signal signature appears at 76–84 (IRSFQELLL).

The protein belongs to the papillomaviridae E7 protein family. As to quaternary structure, homodimer. Homooligomer. Interacts with host RB1; this interaction induces dissociation of RB1-E2F1 complex thereby disrupting RB1 activity. Interacts with host EP300; this interaction represses EP300 transcriptional activity. Interacts with protein E2; this interaction inhibits E7 oncogenic activity. Interacts with host TMEM173/STING; this interaction impairs the ability of TMEM173/STING to sense cytosolic DNA and promote the production of type I interferon (IFN-alpha and IFN-beta). Post-translationally, highly phosphorylated.

Its subcellular location is the host cytoplasm. It is found in the host nucleus. Plays a role in viral genome replication by driving entry of quiescent cells into the cell cycle. Stimulation of progression from G1 to S phase allows the virus to efficiently use the cellular DNA replicating machinery to achieve viral genome replication. E7 protein has both transforming and trans-activating activities. Induces the disassembly of the E2F1 transcription factor from RB1, with subsequent transcriptional activation of E2F1-regulated S-phase genes. Interferes with host histone deacetylation mediated by HDAC1 and HDAC2, leading to transcription activation. Also plays a role in the inhibition of both antiviral and antiproliferative functions of host interferon alpha. Interaction with host TMEM173/STING impairs the ability of TMEM173/STING to sense cytosolic DNA and promote the production of type I interferon (IFN-alpha and IFN-beta). The sequence is that of Protein E7 from Homo sapiens (Human).